The following is a 193-amino-acid chain: Thioredoxin reductase-like selenoprotein T1a (193 aa).

The first 21 residues, 1–21 (MRWLPFSALLLWALCLHSASA), serve as a signal peptide directing secretion. The cysteinyl-selenocysteine (Cys-Sec) cross-link spans 44 to 47 (CVSU). Position 47 (selenocysteine 47) is a non-standard amino acid, selenocysteine. A helical membrane pass occupies residues 83–101 (IASFLSMFKLLLIGVIILG).

The protein belongs to the SelWTH family. Selenoprotein T subfamily. In terms of processing, may contain a selenide-sulfide bond between Cys-44 and Sec-47. This bond is speculated to serve as redox-active pair. As to expression, expressed in embryonic olfactory vesicles and the photoreceptor cell layer of the embryonic retina. Low level in embryonic epiphysis.

Its subcellular location is the endoplasmic reticulum membrane. It carries out the reaction [thioredoxin]-dithiol + NADP(+) = [thioredoxin]-disulfide + NADPH + H(+). Functionally, selenoprotein with thioredoxin reductase-like oxidoreductase activity. This chain is Thioredoxin reductase-like selenoprotein T1a, found in Danio rerio (Zebrafish).